The chain runs to 430 residues: Protein DSE3 (430 aa).

S395 is modified (phosphoserine).

Its subcellular location is the bud neck. May be involved in the establishment of the daughter fate. The polypeptide is Protein DSE3 (DSE3) (Saccharomyces cerevisiae (strain ATCC 204508 / S288c) (Baker's yeast)).